Reading from the N-terminus, the 114-residue chain is Protein U68 (114 aa).

The protein belongs to the herpesviridae UL96 family.

This is Protein U68 (U68) from Homo sapiens (Human).